We begin with the raw amino-acid sequence, 549 residues long: Probable protein kinase UbiB (549 aa).

Positions 123–501 constitute a Protein kinase domain; sequence DFDETPLASA…QQQAHKSNYM (379 aa). Residues 129–137 and K152 contribute to the ATP site; that span reads LASASISQV. The Proton acceptor role is filled by D287. A run of 2 helical transmembrane segments spans residues 499-516 and 521-540; these read NYML…TLLF and TLWS…FIGW.

This sequence belongs to the ABC1 family. UbiB subfamily.

The protein localises to the cell inner membrane. Its pathway is cofactor biosynthesis; ubiquinone biosynthesis [regulation]. Functionally, is probably a protein kinase regulator of UbiI activity which is involved in aerobic coenzyme Q (ubiquinone) biosynthesis. The protein is Probable protein kinase UbiB of Shewanella sp. (strain W3-18-1).